The sequence spans 226 residues: Thymidylate kinase (226 aa).

12–19 (GIDGAGKS) provides a ligand contact to ATP.

Belongs to the thymidylate kinase family.

It catalyses the reaction dTMP + ATP = dTDP + ADP. Functionally, phosphorylation of dTMP to form dTDP in both de novo and salvage pathways of dTTP synthesis. The sequence is that of Thymidylate kinase from Verminephrobacter eiseniae (strain EF01-2).